A 292-amino-acid polypeptide reads, in one-letter code: Geranyl diphosphate 2-C-methyltransferase (292 aa).

It belongs to the geranyl diphosphate 2-C-methyltransferase family. Mg(2+) serves as cofactor.

It carries out the reaction (2E)-geranyl diphosphate + S-adenosyl-L-methionine = (E)-2-methylgeranyl diphosphate + S-adenosyl-L-homocysteine + H(+). Catalyzes the SAM-dependent methylation of geranyl diphosphate (GPP) to yield (E)-2-methylgeranyl diphosphate (2-MeGPP). The polypeptide is Geranyl diphosphate 2-C-methyltransferase (Streptomyces coelicolor (strain ATCC BAA-471 / A3(2) / M145)).